The following is a 227-amino-acid chain: Phosphoribosylformylglycinamidine synthase subunit PurQ (227 aa).

The 225-residue stretch at phenylalanine 3–aspartate 227 folds into the Glutamine amidotransferase type-1 domain. Cysteine 86 (nucleophile) is an active-site residue. Catalysis depends on residues histidine 203 and glutamate 205.

In terms of assembly, part of the FGAM synthase complex composed of 1 PurL, 1 PurQ and 2 PurS subunits.

The protein resides in the cytoplasm. It carries out the reaction N(2)-formyl-N(1)-(5-phospho-beta-D-ribosyl)glycinamide + L-glutamine + ATP + H2O = 2-formamido-N(1)-(5-O-phospho-beta-D-ribosyl)acetamidine + L-glutamate + ADP + phosphate + H(+). The enzyme catalyses L-glutamine + H2O = L-glutamate + NH4(+). It participates in purine metabolism; IMP biosynthesis via de novo pathway; 5-amino-1-(5-phospho-D-ribosyl)imidazole from N(2)-formyl-N(1)-(5-phospho-D-ribosyl)glycinamide: step 1/2. Functionally, part of the phosphoribosylformylglycinamidine synthase complex involved in the purines biosynthetic pathway. Catalyzes the ATP-dependent conversion of formylglycinamide ribonucleotide (FGAR) and glutamine to yield formylglycinamidine ribonucleotide (FGAM) and glutamate. The FGAM synthase complex is composed of three subunits. PurQ produces an ammonia molecule by converting glutamine to glutamate. PurL transfers the ammonia molecule to FGAR to form FGAM in an ATP-dependent manner. PurS interacts with PurQ and PurL and is thought to assist in the transfer of the ammonia molecule from PurQ to PurL. In Aquifex aeolicus (strain VF5), this protein is Phosphoribosylformylglycinamidine synthase subunit PurQ.